Reading from the N-terminus, the 66-residue chain is Large ribosomal subunit protein bL35 (66 aa).

The protein belongs to the bacterial ribosomal protein bL35 family.

In Leptospira biflexa serovar Patoc (strain Patoc 1 / Ames), this protein is Large ribosomal subunit protein bL35.